A 258-amino-acid chain; its full sequence is Ubiquinone/menaquinone biosynthesis C-methyltransferase UbiE (258 aa).

Positions 1 to 20 (MSESRTSADGGMETSYGFRE) are disordered. Residues Thr81, Asp102, and 130–131 (NA) contribute to the S-adenosyl-L-methionine site.

This sequence belongs to the class I-like SAM-binding methyltransferase superfamily. MenG/UbiE family.

It carries out the reaction a 2-demethylmenaquinol + S-adenosyl-L-methionine = a menaquinol + S-adenosyl-L-homocysteine + H(+). The catalysed reaction is a 2-methoxy-6-(all-trans-polyprenyl)benzene-1,4-diol + S-adenosyl-L-methionine = a 5-methoxy-2-methyl-3-(all-trans-polyprenyl)benzene-1,4-diol + S-adenosyl-L-homocysteine + H(+). It functions in the pathway quinol/quinone metabolism; menaquinone biosynthesis; menaquinol from 1,4-dihydroxy-2-naphthoate: step 2/2. Its pathway is cofactor biosynthesis; ubiquinone biosynthesis. In terms of biological role, methyltransferase required for the conversion of demethylmenaquinol (DMKH2) to menaquinol (MKH2) and the conversion of 2-polyprenyl-6-methoxy-1,4-benzoquinol (DDMQH2) to 2-polyprenyl-3-methyl-6-methoxy-1,4-benzoquinol (DMQH2). In Rhizobium etli (strain ATCC 51251 / DSM 11541 / JCM 21823 / NBRC 15573 / CFN 42), this protein is Ubiquinone/menaquinone biosynthesis C-methyltransferase UbiE.